Here is an 898-residue protein sequence, read N- to C-terminus: MRLFVSEGAPGSLPVLAAAGRAQGRAELLISTVGPEECVVPFLTRPKVPVLQLDSGNYLFSTSAICRYFFLLSGWEQDDLTNQWLEWEATELQPALSAALYYLVVQGKKGEDVLGPVRRALTHIDHSLSRRSCPFLAGETESLADIVLWGALYPLLQDPSYLPEELGALHSWFQTLSSQEPCQRAAETVLKQQGVLALRPYLQKQPQPSSLEGRLVSNEPEEEELATLSEEEIAVAVAAWEKGLESLPPLRPQQNPVLPVAGERNVLITSALPYVNNVPHLGNIIGCVLSADVFARYSRLRQWNTLYLCGTDEYGTATETKAMEEGLTPQEICDKYHVIHADIYRWFNISFDFFGRTTTPQQTKITQDIFQRLLARGFVLQDTVEQLRCEHCARFLADRFVEGVCPFCGYEEARGDQCDKCGKLINAIELKKPQCKVCRSCPVVKSSQHLFLDLPKLAARVEEWLEKTLPGSDWTANARFIIRSWLRDGLKPRCITRDLKWGTPVPLEGFEDKVFYVWFDATIGYLSITANYTDQWEKWWKNPEQVNLYQFMAKDNVPFHGIVFPSSALGAEDNYTLVSHLIATEYLNYEDGKFSKSRGVGVFGDMAQDTGIPADIWRFYLLYNRPEGQDSAFSWTDMLFKNNSELLNNLGNFINRAGMFVSKFFGGFVPEMVLTSDDQRLLTHITLELQHYHQLLEKVRIRDALRSILTISRHGNQYIQVNEPWKRIKGGEADRQRAGTVTGLAVNIAALLSVMLQPYMPTVSATIQAQLQLPPPACSILPTNFLCTLPAGHQIGTVSPLFQKLENDQIESLKQRFSGGQAKASPKTAAGLTTAGPQQIQALTEEVTKQGNIVRELKAQKADKNQIAAEVAKLLDLKKQLALAEGKPLETSKGKKKK.

The 125-residue stretch at 74 to 198 (GWEQDDLTNQ…VLKQQGVLAL (125 aa)) folds into the GST C-terminal domain. Positions 273–283 (PYVNNVPHLGN) match the 'HIGH' region motif. The short motif at 593–597 (KFSKS) is the 'KMSKS' region element. ATP is bound at residue Lys-596. Ser-825 carries the phosphoserine modification. Position 833 is a phosphothreonine (Thr-833). One can recognise a WHEP-TRS domain in the interval 839-895 (QIQALTEEVTKQGNIVRELKAQKADKNQIAAEVAKLLDLKKQLALAEGKPLETSKGK).

This sequence belongs to the class-I aminoacyl-tRNA synthetase family. In terms of assembly, monomer. Part of a multisubunit complex that groups tRNA ligases for Arg (RARS1), Asp (DARS1), Gln (QARS1), Ile (IARS1), Leu (LARS1), Lys (KARS1), Met (MARS1) the bifunctional ligase for Glu and Pro (EPRS1) and the auxiliary subunits AIMP1/p43, AIMP2/p38 and EEF1E1/p18. Forms a linear complex that contains MARS1, EEF1E1, EPRS1 and AIMP2 that is at the core of the multisubunit complex.

It is found in the cytoplasm. It localises to the cytosol. The protein localises to the nucleus. The protein resides in the nucleolus. The catalysed reaction is tRNA(Met) + L-methionine + ATP = L-methionyl-tRNA(Met) + AMP + diphosphate. Its function is as follows. Catalyzes the specific attachment of an amino acid to its cognate tRNA in a 2 step reaction: the amino acid (AA) is first activated by ATP to form AA-AMP and then transferred to the acceptor end of the tRNA. Plays a role in the synthesis of ribosomal RNA in the nucleolus. The chain is Methionine--tRNA ligase, cytoplasmic (MARS1) from Bos taurus (Bovine).